The chain runs to 493 residues: MDYPMKKVKIFFNYLMAHRFKLCFLPLMVAIAVEASRLSTQDLQNFYLYLQNNHTSLTMFFLYLALGSTLYLMTRPKPVYLVDFSCYLPPSHLKASTQRIMQHVRLVREAGAWKQESDYLMDFCEKILERSGLGQETYVPEGLQTLPLQQNLAVSRIETEEVIIGAVDNLFRNTGISPSDIGILVVNSSTFNPTPSLSSILVNKFKLRDNIKSLNLGGMGCSAGVIAIDAAKSLLQVHRNTYALVVSTENITQNLYMGNNKSMLVTNCLFRIGGAAILLSNRSIDRKRAKYELVHTVRVHTGADDRSYECATQEEDEDGIVGVSLSKNLPMVAARTLKINIATLGPLVLPISEKFHFFVRFVKKKFLNPKLKHYIPDFKLAFEHFCIHAGGRALIDEMEKNLHLTPLDVEASRMTLHRFGNTSSSSIWYELAYTEAKGRMTKGDRIWQIALGSGFKCNSSVWVALRNVKPSTNNPWEQCLHKYPVEIDIDLKE.

The N-terminal stretch at 1–35 (MDYPMKKVKIFFNYLMAHRFKLCFLPLMVAIAVEA) is a signal peptide. Residues 52-74 (NNHTSLTMFFLYLALGSTLYLMT) form a helical membrane-spanning segment. Residues 71–366 (YLMTRPKPVY…FFVRFVKKKF (296 aa)) enclose the FAE domain. Residues cysteine 221, histidine 300, histidine 384, histidine 388, histidine 417, and asparagine 421 contribute to the active site.

It belongs to the thiolase-like superfamily. Chalcone/stilbene synthases family. Expressed in siliques.

The protein localises to the membrane. It catalyses the reaction a very-long-chain acyl-CoA + malonyl-CoA + H(+) = a very-long-chain 3-oxoacyl-CoA + CO2 + CoA. It participates in lipid metabolism; fatty acid biosynthesis. The chain is 3-ketoacyl-CoA synthase 16 from Arabidopsis thaliana (Mouse-ear cress).